The primary structure comprises 223 residues: MGPFLPAICVVLLALNAAVSPASVGPEDYPAADEAERTANNDIIFDDYRGKGCVDDSGFVYKLGERFFPGHSNCPCVCTEDGPVCDQPECPKIHPKCTKVEHNGCCPECKEVKNFCEYRGKTYKILEEFKPSPCEWCRCEPNNEVHCVVADCAVPECVNPVYEPEQCCPICKNGPNCFAGTTIIPAGIEVKVDDCTICRCHSGDWWKPAQCLRRECLNGQATS.

A signal peptide spans 1 to 21; sequence MGPFLPAICVVLLALNAAVSP. 2 consecutive VWFC domains span residues 51 to 110 and 114 to 172; these read KGCV…PECK and NFCE…PICK.

It is found in the secreted. It localises to the synapse. Its function is as follows. May play a role in bone differentiation and matrix mineralization. May play a role in neural development. The polypeptide is von Willebrand factor C domain-containing protein 2-like (vwc2l) (Danio rerio (Zebrafish)).